A 462-amino-acid polypeptide reads, in one-letter code: Tissue alpha-L-fucosidase (462 aa).

The signal sequence occupies residues 1–28 (MWDLKSEWWAVGFGLLLLLAASAQAGGL). N-linked (GlcNAc...) asparagine glycans are attached at residues N237, N264, and N378.

This sequence belongs to the glycosyl hydrolase 29 family. As to quaternary structure, homotetramer.

Its subcellular location is the lysosome. The catalysed reaction is an alpha-L-fucoside + H2O = L-fucose + an alcohol. It carries out the reaction a neolactoside IV(2)-alpha-Fuc-nLc4Cer(d18:1(4E)) + H2O = a neolactoside nLc4Cer(d18:1(4E)) + L-fucose. The enzyme catalyses a neolactoside IV(2)-alpha-Fuc-nLc4Cer(d18:0) + H2O = a neolactoside nLc4Cer(d18:0) + L-fucose. Its function is as follows. Alpha-L-fucosidase is responsible for hydrolyzing the alpha-1,6-linked fucose joined to the reducing-end N-acetylglucosamine of the carbohydrate moieties of glycoproteins. This chain is Tissue alpha-L-fucosidase (Fuca1), found in Rattus norvegicus (Rat).